The following is a 926-amino-acid chain: Peripheral plasma membrane protein CASK (926 aa).

In terms of domain architecture, Protein kinase spans 12–276 (YELCEVIGKG…VYEALNHPWL (265 aa)). ATP contacts are provided by residues 18 to 26 (IGKGPFSVV) and lysine 41. Serine 51 carries the phosphoserine modification. Residue aspartate 141 is part of the active site. Serine 151 and serine 155 each carry phosphoserine; by autocatalysis. The residue at position 182 (threonine 182) is a Phosphothreonine. The interval 305 to 315 (KGAVLAAVSSH) is calmodulin-binding. Phosphoserine is present on serine 313. L27 domains are found at residues 343–398 (AERA…SPQI) and 402–455 (PSDA…YSDE). Residues 482–909 (MENVTRVRLV…DETIRHLEEA (428 aa)) form a required for interaction with NRXN1 (via C-terminal tail) region. Positions 490–571 (LVQFQKNTDE…SITFKIVPSY (82 aa)) constitute a PDZ domain. Phosphoserine is present on residues serine 570 and tyrosine 571. The disordered stretch occupies residues 574–610 (QSSSCERDSPSTSRQSPANGHSSTNNSVSDLPSTTQP). Residues 612–682 (GRQIYVRAQF…PSPELQEWRV (71 aa)) form the SH3 domain. Residues 739–911 (RKTLVLLGAH…TIRHLEEAVE (173 aa)) enclose the Guanylate kinase-like domain.

It in the N-terminal section; belongs to the protein kinase superfamily. CAMK Ser/Thr protein kinase family. CaMK subfamily. Belongs to the MAGUK family. CASK and LIN7 form a tripartite complex with CASKIN1. Component of the brain-specific heterotrimeric complex (LIN-10-LIN-2-LIN-7 complex) composed of at least APBA1, CASK, and LIN7, which associates with the motor protein KIF17 to transport vesicles along microtubules. Forms a heterotrimeric complex with DLG1 and LIN7B via their L27 domains. Identified in a complex with ACTN4, IQGAP1, MAGI2, NPHS1, SPTAN1 and SPTBN1. Part of a complex containing CASK, TBR1 and TSPYL2. Interacts with WHRN. Interacts (via the PDZ, SH3 and guanylate kinase-like domains) with NRXN1 (via C-terminus). Interacts with CASKIN1, APBA1, LIN7(A/B/C), and L27 domain of DLG1 and isoform 2 of DLG4. Interacts with FCHSD2. Interacts with KIRREL3. Interacts with TBR1. Interacts with TSPYL2. Unlike other protein kinases, does not require a divalent cation such as magnesium for catalytic activity. serves as cofactor.

It localises to the nucleus. It is found in the cytoplasm. Its subcellular location is the cell membrane. It carries out the reaction L-seryl-[protein] + ATP = O-phospho-L-seryl-[protein] + ADP + H(+). It catalyses the reaction L-threonyl-[protein] + ATP = O-phospho-L-threonyl-[protein] + ADP + H(+). Differs from archetypal CaMK members in that the kinase domain exhibits a constitutively active conformation and the autoinhibitory region does not engage in direct contact with the ATP-binding cleft, although it still binds Ca(2+)/CAM. Its function is as follows. Multidomain scaffolding Mg(2+)-independent protein kinase that catalyzes the phosphotransfer from ATP to proteins such as NRXN1, and plays a role in synaptic transmembrane protein anchoring and ion channel trafficking. Contributes to neural development and regulation of gene expression via interaction with the transcription factor TBR1. Binds to cell-surface proteins, including amyloid precursor protein, neurexins, and syndecans. May mediate a link between the extracellular matrix and the actin cytoskeleton via its interaction with syndecan and with the actin/spectrin-binding protein 4.1. Component of the LIN-10-LIN-2-LIN-7 complex, which associates with the motor protein KIF17 to transport vesicles containing N-methyl-D-aspartate (NMDA) receptor subunit NR2B along microtubules. The chain is Peripheral plasma membrane protein CASK from Mus musculus (Mouse).